Here is a 542-residue protein sequence, read N- to C-terminus: MDLDAITKHSASHAKPDGLILQYGTAGFRTKADRLDHVMFRMGLLAVLRSKQTKSTIGVMVTASHNPEDDNGVKLVDPLGEMLAPSWEEHATHLANAEEQDLARALVAISEEAAVNLHQDAFVVIGRDTRPSSEKLSESVIDGVTVLGGQFHDYGLLTTPQLHYMVCCRNTGGQYGEATIDGYYHKLSTAFVELSKQASCSGDDHRTLKVDCANGIGALKLKEMKHYLPQGLSVQLFNDGTKGKLNHFCGADFVKSHQKPPEGIEMKANERCCSFDGDADRIIYYYCDVDGHFHLIDGDKIATLISSFLKELLLEIGESLTVGVVQTAYANGSSTRYLEEVMKVPVYCTKTGVKHLHHKAQEFDLGVYFEANGHGTVLFSKAAEAKIRQLAKELEDKKGKAAKMLENVIDLFNQATGDAISDMLVIEAILALKGLTIQQWDALYTDLPNRQLKVKVADRQVISTTDAERQVVKPPGLQEAINDLVKKYKLSRAFVRPSGTEDVVRVYAEADSQENADSLAYEVSLAVFQQAGGVGERPQPGF.

M1 is modified (N-acetylmethionine). A Phosphothreonine modification is found at T62. S64 functions as the Phosphoserine intermediate in the catalytic mechanism. Mg(2+)-binding residues include S64, D276, D278, and D280. Residue S64 is modified to Phosphoserine. Residues 370-372 (EAN), 496-500 (RPSGT), and R505 each bind substrate.

It belongs to the phosphohexose mutase family. Mg(2+) serves as cofactor.

It catalyses the reaction N-acetyl-alpha-D-glucosamine 1-phosphate = N-acetyl-D-glucosamine 6-phosphate. The protein operates within nucleotide-sugar biosynthesis; UDP-N-acetyl-alpha-D-glucosamine biosynthesis; N-acetyl-alpha-D-glucosamine 1-phosphate from alpha-D-glucosamine 6-phosphate (route I): step 2/2. Its activity is regulated as follows. Inhibited by Mn(2+), Cd(2+), Zn(2+), Cu(2+) and Be(2+). Its function is as follows. Catalyzes the conversion of GlcNAc-6-P into GlcNAc-1-P during the synthesis of uridine diphosphate/UDP-GlcNAc, a sugar nucleotide critical to multiple glycosylation pathways including protein N- and O-glycosylation. In Sus scrofa (Pig), this protein is Phosphoacetylglucosamine mutase.